The chain runs to 791 residues: GDH/6PGL endoplasmic bifunctional protein (791 aa).

A signal peptide spans 1–19; sequence MWNMLIVAMCLALLGCLQA. A Pyrrolidone carboxylic acid modification is found at Gln-20. The hexose-6-phosphate dehydrogenase stretch occupies residues 20 to 526; the sequence is QELQGHVSII…SGRLFFSQQQ (507 aa). NADP(+)-binding positions include 32–39 and Tyr-149; that span reads GATGDLAK. Residue Asn-157 is glycosylated (N-linked (GlcNAc...) asparagine). An NADP(+)-binding site is contributed by Lys-174. D-glucose 6-phosphate contacts are provided by residues Lys-174, 204-208, Glu-243, and Asp-262; that span reads HYLGK. At Lys-208 the chain carries N6-succinyllysine. The active-site Proton acceptor is the His-267. The N-linked (GlcNAc...) asparagine glycan is linked to Asn-282. Lys-360 and Arg-365 together coordinate D-glucose 6-phosphate. Arg-370 is an NADP(+) binding site. The interval 527–540 is linker; the sequence is PEQLVPGPGPAPMP. The segment at 541 to 791 is 6-phosphogluconolactonase; the sequence is SDFQVLRAKY…WYMDYDAFLG (251 aa). An NADP(+)-binding site is contributed by Trp-617. An N-linked (GlcNAc...) asparagine glycan is attached at Asn-683.

In the N-terminal section; belongs to the glucose-6-phosphate dehydrogenase family. The protein in the C-terminal section; belongs to the glucosamine/galactosamine-6-phosphate isomerase family. 6-phosphogluconolactonase subfamily. In terms of assembly, homodimer. As to expression, present in most tissues examined, strongest in liver.

Its subcellular location is the endoplasmic reticulum lumen. The enzyme catalyses D-glucose 6-phosphate + NADP(+) = 6-phospho-D-glucono-1,5-lactone + NADPH + H(+). The catalysed reaction is D-glucose 6-phosphate + NAD(+) = 6-phospho-D-glucono-1,5-lactone + NADH + H(+). It catalyses the reaction 6-phospho-D-glucono-1,5-lactone + H2O = 6-phospho-D-gluconate + H(+). It carries out the reaction 2-deoxy-D-glucose 6-phosphate + NAD(+) = 2-deoxy-6-phospho-D-glucono-1,5-lactone + NADH + H(+). The enzyme catalyses 2-deoxy-D-glucose 6-phosphate + NADP(+) = 2-deoxy-6-phospho-D-glucono-1,5-lactone + NADPH + H(+). The catalysed reaction is D-galactose 6-phosphate + NADP(+) = 6-phospho-D-galactono-1,5-lactone + NADPH + H(+). It catalyses the reaction D-galactose 6-phosphate + NAD(+) = 6-phospho-D-galactono-1,5-lactone + NADH + H(+). It carries out the reaction D-glucosamine 6-phosphate + NADP(+) = 2-amino-2-deoxy-6-phospho-D-glucono-1,5-lactone + NADPH + 2 H(+). The enzyme catalyses D-glucose + NAD(+) = D-glucono-1,5-lactone + NADH + H(+). The catalysed reaction is D-glucose + NADP(+) = D-glucono-1,5-lactone + NADPH + H(+). It catalyses the reaction D-glucose 6-sulfate + NADP(+) = 6-sulfo-D-glucono-1,5-lactone + NADPH + H(+). The protein operates within carbohydrate degradation; pentose phosphate pathway; D-ribulose 5-phosphate from D-glucose 6-phosphate (oxidative stage): step 1/3. It functions in the pathway carbohydrate degradation; pentose phosphate pathway; D-ribulose 5-phosphate from D-glucose 6-phosphate (oxidative stage): step 2/3. Its pathway is carbohydrate degradation; pentose phosphate pathway; D-ribulose 5-phosphate from D-glucose 6-phosphate (oxidative stage). Bifunctional enzyme localized in the lumen of the endoplasmic reticulum that catalyzes the first two steps of the oxidative branch of the pentose phosphate pathway/shunt, an alternative to glycolysis and a major source of reducing power and metabolic intermediates for biosynthetic processes. Has a hexose-6-phosphate dehydrogenase activity, with broad substrate specificity compared to glucose-6-phosphate 1-dehydrogenase/G6PD, and catalyzes the first step of the pentose phosphate pathway. In addition, acts as a 6-phosphogluconolactonase and catalyzes the second step of the pentose phosphate pathway. May have a dehydrogenase activity for alternative substrates including glucosamine 6-phosphate and glucose 6-sulfate. The main function of this enzyme is to provide reducing equivalents such as NADPH to maintain the adequate levels of reductive cofactors in the oxidizing environment of the endoplasmic reticulum. By producing NADPH that is needed by reductases of the lumen of the endoplasmic reticulum like corticosteroid 11-beta-dehydrogenase isozyme 1/HSD11B1, indirectly regulates their activity. This is GDH/6PGL endoplasmic bifunctional protein from Homo sapiens (Human).